Consider the following 1265-residue polypeptide: Dynactin subunit 1 (1265 aa).

The CAP-Gly domain maps to 27 to 69; sequence GMTSFAVGKWVGVVLDEPKGKNSGSIKGQQYFQCDENCGMFVR. Residues 81 to 179 are disordered; the sequence is GSRRSIEDVS…GNGAASHASS (99 aa). Ser-85, Ser-110, Ser-114, Ser-117, and Ser-121 each carry phosphoserine. Low complexity-rich tracts occupy residues 103 to 138 and 161 to 177; these read RLSSSRTSLSSSRQSLLGSRTQLTTSLSERTASSSS and AEGAPAASGGNGAASHA. Residue Ser-183 is modified to Phosphoserine. 3 coiled-coil regions span residues 213-570, 812-836, and 967-1084; these read NSGA…ESLQ, LIQFLNENMESVRQQVKLIKRRLPS, and QRAQ…NSTT. The disordered stretch occupies residues 1082–1106; it reads STTGKVQPGSESHSPHNISLSGNTS. Phosphoserine is present on Ser-1117. The stretch at 1128–1160 forms a coiled coil; the sequence is EEVELLKNAFNQERNQRLRLQAQDMRAKLSQFE.

It belongs to the dynactin 150 kDa subunit family. Monomer and homodimer. Subunit of dynactin, a multiprotein complex part of a tripartite complex with dynein and a adapter, such as BICDL1, BICD2 or HOOK3. The dynactin complex is built around ACTR1A/ACTB filament and consists of an actin-related filament composed of a shoulder domain, a pointed end and a barbed end. Its length is defined by its flexible shoulder domain. The soulder is composed of 2 DCTN1 subunits, 4 DCTN2 and 2 DCTN3. DCTN1/p150(glued) binds directly to microtubules and to cytoplasmic dynein.

The protein resides in the cytoplasm. Its subcellular location is the cytoskeleton. Part of the dynactin complex that activates the molecular motor dynein for ultra-processive transport along microtubules. Plays a key role in dynein-mediated retrograde transport of vesicles and organelles along microtubules by recruiting and tethering dynein to microtubules. Binds to both dynein and microtubules providing a link between specific cargos, microtubules and dynein. Essential for targeting dynein to microtubule plus ends, recruiting dynein to membranous cargos and enhancing dynein processivity (the ability to move along a microtubule for a long distance without falling off the track). Can also act as a brake to slow the dynein motor during motility along the microtubule. Can regulate microtubule stability by promoting microtubule formation, nucleation and polymerization and by inhibiting microtubule catastrophe in neurons. Inhibits microtubule catastrophe by binding both to microtubules and to tubulin, leading to enhanced microtubule stability along the axon. Plays a role in metaphase spindle orientation. Plays a role in centriole cohesion and subdistal appendage organization and function. Its recruitment to the centriole in a KIF3A-dependent manner is essential for the maintenance of centriole cohesion and the formation of subdistal appendage. Also required for microtubule anchoring at the mother centriole. Plays a role in primary cilia formation. In Drosophila melanogaster (Fruit fly), this protein is Dynactin subunit 1.